The sequence spans 60 residues: Homeobox protein engrailed-like B (60 aa).

The segment at residues 1 to 41 is a DNA-binding region (homeobox); it reads VEQLQRLKSEFGASRYLTEARRQALAQELRLNEAQIKIWFQ.

It belongs to the engrailed homeobox family.

The protein resides in the nucleus. The sequence is that of Homeobox protein engrailed-like B from Myxine glutinosa (Atlantic hagfish).